The chain runs to 715 residues: ATP-dependent DNA helicase Hel308 (715 aa).

The short motif at 8-36 is the Q motif element; sequence MPIEDLKLPSNVIEIIKKRGIKKLNPPQT. Residues Gln-35 and 53–60 each bind ATP; that span reads SPTGSGKT. The region spanning 40-203 is the Helicase ATP-binding domain; sequence KKGLLEGNRL…WLGAEPVATN (164 aa). The DEAH box signature appears at 152–155; that stretch reads DELH. The Helicase C-terminal domain occupies 236-442; the sequence is HGDDAIIAYT…ERAFYTFLLG (207 aa).

It belongs to the helicase family. Hel308 subfamily. As to quaternary structure, monomer.

The catalysed reaction is Couples ATP hydrolysis with the unwinding of duplex DNA by translocating in the 3'-5' direction.. It catalyses the reaction ATP + H2O = ADP + phosphate + H(+). Functionally, DNA-dependent ATPase and 3'-5' DNA helicase that may be involved in repair of stalled replication forks. A low processivity 3'-5' helicase. Unwinds short dsDNA substrates with 3'-overhangs (25 bp dsDNA with 25 base overhang), less active on longer dsDNA substrates. Also unwinds the lagging strand of a stalled replication fork (but the leading strand was not tested). Binds ssDNA, but dsDNA about 35-fold less well. Able to displace streptavidin from biotinylated ssDNA, which is partially inhibited by DNA-binding proteins, suggesting it may play a role in stripping proteins from stalled replication forks. In Saccharolobus solfataricus (strain 98/2) (Sulfolobus solfataricus), this protein is ATP-dependent DNA helicase Hel308.